The sequence spans 396 residues: Digeranylgeranylglycerophospholipid reductase (396 aa).

FAD is bound by residues Gly14, Glu33, Cys44, Gly45, Gly47, Arg100, Ala124, Glu162, Asp283, Gly295, and Ile296. Positions 338 and 374 each coordinate a 2,3-bis-O-(geranylgeranyl)-sn-glycerol 1-phospholipid.

It belongs to the geranylgeranyl reductase family. DGGGPL reductase subfamily. The cofactor is FAD.

The enzyme catalyses 2,3-bis-O-(phytanyl)-sn-glycerol 1-phosphate + 8 NADP(+) = 2,3-bis-O-(geranylgeranyl)-sn-glycerol 1-phosphate + 8 NADPH + 8 H(+). The catalysed reaction is 2,3-bis-O-(phytanyl)-sn-glycerol 1-phosphate + 8 NAD(+) = 2,3-bis-O-(geranylgeranyl)-sn-glycerol 1-phosphate + 8 NADH + 8 H(+). It carries out the reaction a 2,3-bis-O-phytanyl-sn-glycerol 1-phospholipid + 8 A = a 2,3-bis-O-(geranylgeranyl)-sn-glycerol 1-phospholipid + 8 AH2. It catalyses the reaction CDP-2,3-bis-O-(geranylgeranyl)-sn-glycerol + 8 AH2 = CDP-2,3-bis-O-(phytanyl)-sn-glycerol + 8 A. The enzyme catalyses archaetidylserine + 8 AH2 = 2,3-bis-O-phytanyl-sn-glycero-3-phospho-L-serine + 8 A. The protein operates within membrane lipid metabolism; glycerophospholipid metabolism. Is involved in the reduction of 2,3-digeranylgeranylglycerophospholipids (unsaturated archaeols) into 2,3-diphytanylglycerophospholipids (saturated archaeols) in the biosynthesis of archaeal membrane lipids. Catalyzes the formation of archaetidic acid (2,3-di-O-phytanyl-sn-glyceryl phosphate) from 2,3-di-O-geranylgeranylglyceryl phosphate (DGGGP) via the hydrogenation of each double bond of the isoprenoid chains. Is also probably able to reduce double bonds of geranyl groups in CDP-2,3-bis-O-(geranylgeranyl)-sn-glycerol and archaetidylserine, thus acting at various stages in the biosynthesis of archaeal membrane lipids. This chain is Digeranylgeranylglycerophospholipid reductase, found in Thermoplasma volcanium (strain ATCC 51530 / DSM 4299 / JCM 9571 / NBRC 15438 / GSS1).